A 648-amino-acid polypeptide reads, in one-letter code: tRNA 5-methylaminomethyl-2-thiouridine biosynthesis bifunctional protein MnmC (648 aa).

A tRNA (mnm(5)s(2)U34)-methyltransferase region spans residues 1 to 228 (MTDRLVPASL…VDDLLVGEYA (228 aa)). The segment at 252–648 (IGAGLAGCAV…LRARRVGRAG (397 aa)) is FAD-dependent cmnm(5)s(2)U34 oxidoreductase.

In the N-terminal section; belongs to the methyltransferase superfamily. tRNA (mnm(5)s(2)U34)-methyltransferase family. It in the C-terminal section; belongs to the DAO family. FAD is required as a cofactor.

Its subcellular location is the cytoplasm. It carries out the reaction 5-aminomethyl-2-thiouridine(34) in tRNA + S-adenosyl-L-methionine = 5-methylaminomethyl-2-thiouridine(34) in tRNA + S-adenosyl-L-homocysteine + H(+). Functionally, catalyzes the last two steps in the biosynthesis of 5-methylaminomethyl-2-thiouridine (mnm(5)s(2)U) at the wobble position (U34) in tRNA. Catalyzes the FAD-dependent demodification of cmnm(5)s(2)U34 to nm(5)s(2)U34, followed by the transfer of a methyl group from S-adenosyl-L-methionine to nm(5)s(2)U34, to form mnm(5)s(2)U34. In Burkholderia lata (strain ATCC 17760 / DSM 23089 / LMG 22485 / NCIMB 9086 / R18194 / 383), this protein is tRNA 5-methylaminomethyl-2-thiouridine biosynthesis bifunctional protein MnmC.